The chain runs to 234 residues: Ribose-5-phosphate isomerase A (234 aa).

Substrate-binding positions include 34–37 (TGST), 90–93 (DGAD), and 103–106 (KGGG). Glu-112 functions as the Proton acceptor in the catalytic mechanism. Lys-130 is a substrate binding site.

Belongs to the ribose 5-phosphate isomerase family. In terms of assembly, homodimer.

The catalysed reaction is aldehydo-D-ribose 5-phosphate = D-ribulose 5-phosphate. The protein operates within carbohydrate degradation; pentose phosphate pathway; D-ribose 5-phosphate from D-ribulose 5-phosphate (non-oxidative stage): step 1/1. Its function is as follows. Catalyzes the reversible conversion of ribose-5-phosphate to ribulose 5-phosphate. This is Ribose-5-phosphate isomerase A from Methanosarcina acetivorans (strain ATCC 35395 / DSM 2834 / JCM 12185 / C2A).